Reading from the N-terminus, the 89-residue chain is Small ribosomal subunit protein uS15 (89 aa).

Belongs to the universal ribosomal protein uS15 family. As to quaternary structure, part of the 30S ribosomal subunit. Forms a bridge to the 50S subunit in the 70S ribosome, contacting the 23S rRNA.

Its function is as follows. One of the primary rRNA binding proteins, it binds directly to 16S rRNA where it helps nucleate assembly of the platform of the 30S subunit by binding and bridging several RNA helices of the 16S rRNA. Functionally, forms an intersubunit bridge (bridge B4) with the 23S rRNA of the 50S subunit in the ribosome. This chain is Small ribosomal subunit protein uS15, found in Bifidobacterium longum subsp. infantis (strain ATCC 15697 / DSM 20088 / JCM 1222 / NCTC 11817 / S12).